A 241-amino-acid chain; its full sequence is Uridylate kinase (241 aa).

14–17 (KLSG) serves as a coordination point for ATP. Positions 22–27 (GGLGMG) are involved in allosteric activation by GTP. Gly-56 contributes to the UMP binding site. ATP is bound by residues Gly-57 and Arg-61. Residues Asp-77 and 138–145 (TGNPFFTT) contribute to the UMP site. ATP-binding residues include Thr-165, Tyr-171, and Asp-174.

This sequence belongs to the UMP kinase family. As to quaternary structure, homohexamer.

It localises to the cytoplasm. It catalyses the reaction UMP + ATP = UDP + ADP. It participates in pyrimidine metabolism; CTP biosynthesis via de novo pathway; UDP from UMP (UMPK route): step 1/1. With respect to regulation, allosterically activated by GTP. Inhibited by UTP. Its function is as follows. Catalyzes the reversible phosphorylation of UMP to UDP. The sequence is that of Uridylate kinase from Psychrobacter sp. (strain PRwf-1).